Reading from the N-terminus, the 292-residue chain is Sulfofructosephosphate aldolase (292 aa).

Lys193 functions as the Schiff-base intermediate with substrate in the catalytic mechanism.

This sequence belongs to the aldolase LacD family. Homotetramer.

The enzyme catalyses 6-deoxy-6-sulfo-D-fructose 1-phosphate = (2S)-3-sulfolactaldehyde + dihydroxyacetone phosphate. Its function is as follows. Cleaves 6-deoxy-6-sulfo-D-fructose 1-phosphate (SFP) to form dihydroxyacetone phosphate (DHAP) and 3-sulfolactaldehyde (SLA). Can also catalyze the reverse reaction. This is Sulfofructosephosphate aldolase (yihT) from Salmonella typhimurium (strain LT2 / SGSC1412 / ATCC 700720).